Reading from the N-terminus, the 365-residue chain is Aminomethyltransferase (365 aa).

Belongs to the GcvT family. As to quaternary structure, the glycine cleavage system is composed of four proteins: P, T, L and H.

The enzyme catalyses N(6)-[(R)-S(8)-aminomethyldihydrolipoyl]-L-lysyl-[protein] + (6S)-5,6,7,8-tetrahydrofolate = N(6)-[(R)-dihydrolipoyl]-L-lysyl-[protein] + (6R)-5,10-methylene-5,6,7,8-tetrahydrofolate + NH4(+). In terms of biological role, the glycine cleavage system catalyzes the degradation of glycine. The chain is Aminomethyltransferase from Bacillus pumilus (strain SAFR-032).